Reading from the N-terminus, the 439-residue chain is Ribosomal protein uS12 methylthiotransferase RimO (439 aa).

An MTTase N-terminal domain is found at 7–119 (KQLCLISLGC…IDILIAKKQN (113 aa)). Residues cysteine 16, cysteine 50, cysteine 82, cysteine 151, cysteine 155, and cysteine 158 each contribute to the [4Fe-4S] cluster site. A Radical SAM core domain is found at 137-368 (TGSSVHAYVK…ALKHQNHSFK (232 aa)).

It belongs to the methylthiotransferase family. RimO subfamily. [4Fe-4S] cluster is required as a cofactor.

It localises to the cytoplasm. It catalyses the reaction L-aspartate(89)-[ribosomal protein uS12]-hydrogen + (sulfur carrier)-SH + AH2 + 2 S-adenosyl-L-methionine = 3-methylsulfanyl-L-aspartate(89)-[ribosomal protein uS12]-hydrogen + (sulfur carrier)-H + 5'-deoxyadenosine + L-methionine + A + S-adenosyl-L-homocysteine + 2 H(+). Its function is as follows. Catalyzes the methylthiolation of an aspartic acid residue of ribosomal protein uS12. The protein is Ribosomal protein uS12 methylthiotransferase RimO of Helicobacter pylori (strain HPAG1).